The chain runs to 373 residues: Alanine racemase (373 aa).

The Proton acceptor; specific for D-alanine role is filled by Lys40. Lys40 carries the post-translational modification N6-(pyridoxal phosphate)lysine. A substrate-binding site is contributed by Arg140. The Proton acceptor; specific for L-alanine role is filled by Tyr268. Substrate is bound at residue Met315.

It belongs to the alanine racemase family. The cofactor is pyridoxal 5'-phosphate.

The enzyme catalyses L-alanine = D-alanine. Its pathway is amino-acid biosynthesis; D-alanine biosynthesis; D-alanine from L-alanine: step 1/1. Functionally, catalyzes the interconversion of L-alanine and D-alanine. May also act on other amino acids. In Levilactobacillus brevis (strain ATCC 367 / BCRC 12310 / CIP 105137 / JCM 1170 / LMG 11437 / NCIMB 947 / NCTC 947) (Lactobacillus brevis), this protein is Alanine racemase (alr).